We begin with the raw amino-acid sequence, 317 residues long: Tenomodulin (317 aa).

Topologically, residues 1–30 (MAKNPPENCEGCHILNAEALKSKKICKSLK) are cytoplasmic. The helical; Signal-anchor for type II membrane protein transmembrane segment at 31–50 (ICGLVFGILALTLIVLFWGS) threads the bilayer. Over 51-317 (KHFWPEVSKK…WWVARMLGRV (267 aa)) the chain is Extracellular. The BRICHOS domain maps to 93 to 186 (GNGTDETLEV…ICDNVTMYWI (94 aa)). An N-linked (GlcNAc...) asparagine glycan is attached at Asn-94. A disulfide bond links Cys-120 and Cys-178. A glycan (N-linked (GlcNAc...) asparagine) is linked at Asn-180. Ser-239 carries the post-translational modification Phosphoserine.

Belongs to the chondromodulin-1 family. In terms of tissue distribution, widely expressed with highest expression in tendons and ligaments, in the diaphragm, eye and skeletal muscle. Expressed in neuronal cells of all brain regions. Very low expression, if any, in glial cells.

It localises to the membrane. It is found in the nucleus envelope. Functionally, may be an angiogenesis inhibitor. The protein is Tenomodulin (Tnmd) of Mus musculus (Mouse).